A 238-amino-acid chain; its full sequence is Transcription termination/antitermination protein NusG (238 aa).

Belongs to the NusG family.

Functionally, participates in transcription elongation, termination and antitermination. The chain is Transcription termination/antitermination protein NusG from Mycobacterium tuberculosis (strain CDC 1551 / Oshkosh).